The primary structure comprises 510 residues: Histidine ammonia-lyase (510 aa).

A cross-link (5-imidazolinone (Ala-Gly)) is located at residues Ala143 to Gly145. Ser144 is subject to 2,3-didehydroalanine (Ser).

This sequence belongs to the PAL/histidase family. Post-translationally, contains an active site 4-methylidene-imidazol-5-one (MIO), which is formed autocatalytically by cyclization and dehydration of residues Ala-Ser-Gly.

The protein resides in the cytoplasm. It catalyses the reaction L-histidine = trans-urocanate + NH4(+). It functions in the pathway amino-acid degradation; L-histidine degradation into L-glutamate; N-formimidoyl-L-glutamate from L-histidine: step 1/3. The polypeptide is Histidine ammonia-lyase (Shewanella sediminis (strain HAW-EB3)).